Reading from the N-terminus, the 249-residue chain is tRNA(Phe) (4-demethylwyosine(37)-C(7)) aminocarboxypropyltransferase (249 aa).

Residues Ser-80, Arg-87, Glu-127, and 154-155 contribute to the S-adenosyl-L-methionine site; that span reads DN.

This sequence belongs to the class I-like SAM-binding methyltransferase superfamily. TRM5/TYW2 family.

The protein resides in the cytoplasm. The enzyme catalyses 4-demethylwyosine(37) in tRNA(Phe) + S-adenosyl-L-methionine = 4-demethyl-7-[(3S)-3-amino-3-carboxypropyl]wyosine(37) in tRNA(Phe) + S-methyl-5'-thioadenosine + H(+). In terms of biological role, S-adenosyl-L-methionine-dependent transferase that acts as a component of the wyosine derivatives biosynthesis pathway. Catalyzes the transfer of the alpha-amino-alpha-carboxypropyl (acp) group from S-adenosyl-L-methionine to 4-demethylwyosine (imG-14), forming 7-aminocarboxypropyl-demethylwyosine (wybutosine-86) at position 37 of tRNA(Phe). In Methanocaldococcus jannaschii (strain ATCC 43067 / DSM 2661 / JAL-1 / JCM 10045 / NBRC 100440) (Methanococcus jannaschii), this protein is tRNA(Phe) (4-demethylwyosine(37)-C(7)) aminocarboxypropyltransferase.